The sequence spans 741 residues: Nuclear pore complex protein Nup88 (741 aa).

N-acetylalanine is present on alanine 2. A phosphoserine mark is found at serine 35, serine 50, serine 379, serine 437, serine 442, and serine 517. Threonine 525 is subject to Phosphothreonine. Phosphoserine is present on serine 540. Residues glutamate 585–leucine 651 are a coiled coil. The residue at position 698 (serine 698) is a Phosphoserine.

In terms of assembly, interacts with NUP214/CAN. Interacts with NUP62 and NUP98. As to expression, ubiquitous.

It localises to the nucleus. Its subcellular location is the nuclear pore complex. Its function is as follows. Component of nuclear pore complex. The protein is Nuclear pore complex protein Nup88 (NUP88) of Homo sapiens (Human).